We begin with the raw amino-acid sequence, 388 residues long: Alanine racemase 2 (388 aa).

Lysine 39 serves as the catalytic Proton acceptor; specific for D-alanine. Lysine 39 is subject to N6-(pyridoxal phosphate)lysine. Residue arginine 137 coordinates substrate. Catalysis depends on tyrosine 267, which acts as the Proton acceptor; specific for L-alanine. Residue methionine 315 participates in substrate binding.

This sequence belongs to the alanine racemase family. Pyridoxal 5'-phosphate is required as a cofactor.

It carries out the reaction L-alanine = D-alanine. Its pathway is amino-acid biosynthesis; D-alanine biosynthesis; D-alanine from L-alanine: step 1/1. In terms of biological role, catalyzes the interconversion of L-alanine and D-alanine. May also act on other amino acids. The sequence is that of Alanine racemase 2 (alr2) from Caldanaerobacter subterraneus subsp. tengcongensis (strain DSM 15242 / JCM 11007 / NBRC 100824 / MB4) (Thermoanaerobacter tengcongensis).